A 298-amino-acid polypeptide reads, in one-letter code: Protein ABIL1 (298 aa).

Belongs to the ABI family. As to quaternary structure, binds SCAR2. In terms of tissue distribution, expressed in seedlings, roots, hypocotyls, cotyledons, leaves, stems, and flowers.

It is found in the cytoplasm. The protein localises to the cytoskeleton. Functionally, involved in regulation of actin and microtubule organization. Part of a WAVE complex that activates the Arp2/3 complex. The chain is Protein ABIL1 (ABIL1) from Arabidopsis thaliana (Mouse-ear cress).